Consider the following 343-residue polypeptide: Cytoplasmic tRNA 2-thiolation protein 1 (343 aa).

This sequence belongs to the TtcA family. CTU1/NCS6/ATPBD3 subfamily.

The protein resides in the cytoplasm. Its pathway is tRNA modification; 5-methoxycarbonylmethyl-2-thiouridine-tRNA biosynthesis. In terms of biological role, plays a central role in 2-thiolation of mcm(5)S(2)U at tRNA wobble positions of tRNA(Lys), tRNA(Glu) and tRNA(Gln). Directly binds tRNAs and probably acts by catalyzing adenylation of tRNAs, an intermediate required for 2-thiolation. It is unclear whether it acts as a sulfurtransferase that transfers sulfur from thiocarboxylated URM1 onto the uridine of tRNAs at wobble position. In Drosophila erecta (Fruit fly), this protein is Cytoplasmic tRNA 2-thiolation protein 1.